A 392-amino-acid polypeptide reads, in one-letter code: Small ribosomal subunit protein bS1 (392 aa).

S1 motif domains lie at 16–90 (GDKV…LSKR), 108–173 (DEII…LSRK), 194–262 (GDVI…LSIK), and 279–348 (DDVI…LSIK).

Belongs to the bacterial ribosomal protein bS1 family.

Binds mRNA; thus facilitating recognition of the initiation point. It is needed to translate mRNA with a short Shine-Dalgarno (SD) purine-rich sequence. In Staphylococcus haemolyticus (strain JCSC1435), this protein is Small ribosomal subunit protein bS1 (rpsA).